The sequence spans 246 residues: UPF0246 protein str1967 (246 aa).

It belongs to the UPF0246 family.

This chain is UPF0246 protein str1967, found in Streptococcus thermophilus (strain CNRZ 1066).